We begin with the raw amino-acid sequence, 272 residues long: Undecaprenyl-diphosphatase (272 aa).

A run of 8 helical transmembrane segments spans residues 4-24 (IHSLLVAAILGVVEGLTEFLP), 45-65 (AETFEVVIQLGSILAVVVMFW), 89-109 (LTLGHIVLGMIPAVVLGLVFH), 115-135 (LFNPVNVMYALVVGGLLLIAA), 152-174 (TYRQAFMIGCFQCLALWPGFSRS), 189-209 (YAASEFSFLLAVPMMMGATAL), 225-245 (MFAVGFVTAFIVALIAIKTFL), and 251-271 (ISFIPFAIYRFIVAAAVYVVF).

Belongs to the UppP family.

The protein localises to the cell inner membrane. The catalysed reaction is di-trans,octa-cis-undecaprenyl diphosphate + H2O = di-trans,octa-cis-undecaprenyl phosphate + phosphate + H(+). Functionally, catalyzes the dephosphorylation of undecaprenyl diphosphate (UPP). Confers resistance to bacitracin. The protein is Undecaprenyl-diphosphatase of Citrobacter koseri (strain ATCC BAA-895 / CDC 4225-83 / SGSC4696).